The following is a 197-amino-acid chain: Thymidylate kinase (197 aa).

7-14 (GIDGSGKS) lines the ATP pocket.

It belongs to the thymidylate kinase family.

The catalysed reaction is dTMP + ATP = dTDP + ADP. In terms of biological role, phosphorylation of dTMP to form dTDP in both de novo and salvage pathways of dTTP synthesis. In Thermotoga petrophila (strain ATCC BAA-488 / DSM 13995 / JCM 10881 / RKU-1), this protein is Thymidylate kinase.